The primary structure comprises 395 residues: Putative pyridoxal phosphate-dependent acyltransferase (395 aa).

A pyridoxal 5'-phosphate-binding site is contributed by 110–111; the sequence is GF. His135 serves as a coordination point for substrate. Residues Ser185, 210–213, and 240–243 each bind pyridoxal 5'-phosphate; these read DDAH and TLSK. N6-(pyridoxal phosphate)lysine is present on Lys243. Position 357 (Thr357) interacts with substrate.

Belongs to the class-II pyridoxal-phosphate-dependent aminotransferase family. As to quaternary structure, homodimer. Pyridoxal 5'-phosphate is required as a cofactor.

The chain is Putative pyridoxal phosphate-dependent acyltransferase from Staphylococcus aureus (strain Mu50 / ATCC 700699).